Here is a 160-residue protein sequence, read N- to C-terminus: ATP synthase subunit delta, mitochondrial (160 aa).

Residues 1 to 22 (MFRQSLRSIARTRTGTIGVRTY) constitute a mitochondrion transit peptide.

In terms of assembly, F-type ATP synthases have 2 components, the catalytic core F(1) and the membrane-embedded component F(0), linked together by a central stalk and a peripheral stalk. The central stalk, also called rotor shaft, is often seen as part of F(1). The peripheral stalk is seen as part of F(0). F(0) contains the membrane channel next to the rotor. F-type ATP synthases form dimers but each monomer functions independently in ATP generation. The dimer consists of 18 different polypeptides: ATP1 (subunit alpha, part of F(1), 3 molecules per monomer), ATP2 (subunit beta, part of F(1), 3 molecules per monomer), ATP3 (subunit gamma, part of the central stalk), ATP4 (subunit b, part of the peripheral stalk), ATP5/OSCP (subunit 5/OSCP, part of the peripheral stalk), ATP6 (subunit a, part of the peripheral stalk), ATP7 (subunit d, part of the peripheral stalk), ATP8 (subunit 8, part of the peripheral stalk), OLI1 (subunit c, part of the rotor, 10 molecules per monomer), ATP14 (subunit h, part of the peripheral stalk), ATP15 (subunit epsilon, part of the central stalk), ATP16 (subunit delta, part of the central stalk), ATP17 (subunit f, part of the peripheral stalk), ATP18 (subunit i/j, part of the peripheral stalk). Dimer-specific subunits are ATP19 (subunit k, at interface between monomers), ATP20 (subunit g, at interface between monomers), TIM11 (subunit e, at interface between monomers). Also contains subunit L.

It localises to the mitochondrion inner membrane. Its function is as follows. Mitochondrial membrane ATP synthase (F(1)F(0) ATP synthase or Complex V) produces ATP from ADP in the presence of a proton gradient across the membrane which is generated by electron transport complexes of the respiratory chain. F-type ATP synthases consist of two structural domains, F(1) - containing the extramembraneous catalytic core, and F(0) - containing the membrane proton channel, linked together by a central stalk and a peripheral stalk. During catalysis, ATP synthesis in the catalytic domain of F(1) is coupled via a rotary mechanism of the central stalk subunits to proton translocation. Part of the complex F(1) domain and the central stalk which is part of the complex rotary element. Rotation of the central stalk against the surrounding alpha/ATP1(3)beta/ATP2(3) subunits leads to hydrolysis of ATP in three separate catalytic sites on the beta/ATP2 subunits. The sequence is that of ATP synthase subunit delta, mitochondrial from Pichia angusta (Yeast).